A 432-amino-acid polypeptide reads, in one-letter code: Trigger factor (432 aa).

In terms of domain architecture, PPIase FKBP-type spans 161–246; that stretch reads EDRVTIDFTG…LKKVEERELP (86 aa).

Belongs to the FKBP-type PPIase family. Tig subfamily.

The protein resides in the cytoplasm. The catalysed reaction is [protein]-peptidylproline (omega=180) = [protein]-peptidylproline (omega=0). Functionally, involved in protein export. Acts as a chaperone by maintaining the newly synthesized protein in an open conformation. Functions as a peptidyl-prolyl cis-trans isomerase. The polypeptide is Trigger factor (Klebsiella pneumoniae (strain 342)).